The primary structure comprises 129 residues: Large ribosomal subunit protein bL20 (129 aa).

Belongs to the bacterial ribosomal protein bL20 family.

Its function is as follows. Binds directly to 23S ribosomal RNA and is necessary for the in vitro assembly process of the 50S ribosomal subunit. It is not involved in the protein synthesizing functions of that subunit. In Mycobacterium tuberculosis (strain ATCC 25177 / H37Ra), this protein is Large ribosomal subunit protein bL20.